Here is a 476-residue protein sequence, read N- to C-terminus: Glutamate--tRNA ligase 1 (476 aa).

The 'HIGH' region motif lies at 9 to 19; it reads PSPTGFLHIGG. Positions 238–242 match the 'KMSKS' region motif; the sequence is KLSKR. Lysine 241 contacts ATP.

Belongs to the class-I aminoacyl-tRNA synthetase family. Glutamate--tRNA ligase type 1 subfamily. As to quaternary structure, monomer.

Its subcellular location is the cytoplasm. The enzyme catalyses tRNA(Glu) + L-glutamate + ATP = L-glutamyl-tRNA(Glu) + AMP + diphosphate. Its function is as follows. Catalyzes the attachment of glutamate to tRNA(Glu) in a two-step reaction: glutamate is first activated by ATP to form Glu-AMP and then transferred to the acceptor end of tRNA(Glu). The protein is Glutamate--tRNA ligase 1 of Bartonella tribocorum (strain CIP 105476 / IBS 506).